Consider the following 449-residue polypeptide: Glutamyl-tRNA reductase (449 aa).

Substrate is bound by residues 58–61 (TCNR), Ser121, 126–128 (ETQ), and Gln132. Cys59 functions as the Nucleophile in the catalytic mechanism. 203 to 208 (GLGEMA) is an NADP(+) binding site.

It belongs to the glutamyl-tRNA reductase family. In terms of assembly, homodimer.

The catalysed reaction is (S)-4-amino-5-oxopentanoate + tRNA(Glu) + NADP(+) = L-glutamyl-tRNA(Glu) + NADPH + H(+). It functions in the pathway porphyrin-containing compound metabolism; protoporphyrin-IX biosynthesis; 5-aminolevulinate from L-glutamyl-tRNA(Glu): step 1/2. Functionally, catalyzes the NADPH-dependent reduction of glutamyl-tRNA(Glu) to glutamate 1-semialdehyde (GSA). The polypeptide is Glutamyl-tRNA reductase (Helicobacter pylori (strain HPAG1)).